The sequence spans 599 residues: Elongation factor 4 (599 aa).

Residues 4-186 (SKIRNFSIIA…SIVEKVPAPK (183 aa)) form the tr-type G domain. GTP-binding positions include 16-21 (DHGKST) and 133-136 (NKVD).

It belongs to the TRAFAC class translation factor GTPase superfamily. Classic translation factor GTPase family. LepA subfamily.

The protein localises to the cell inner membrane. It catalyses the reaction GTP + H2O = GDP + phosphate + H(+). Functionally, required for accurate and efficient protein synthesis under certain stress conditions. May act as a fidelity factor of the translation reaction, by catalyzing a one-codon backward translocation of tRNAs on improperly translocated ribosomes. Back-translocation proceeds from a post-translocation (POST) complex to a pre-translocation (PRE) complex, thus giving elongation factor G a second chance to translocate the tRNAs correctly. Binds to ribosomes in a GTP-dependent manner. This is Elongation factor 4 from Syntrophotalea carbinolica (strain DSM 2380 / NBRC 103641 / GraBd1) (Pelobacter carbinolicus).